Consider the following 138-residue polypeptide: uncharacterized protein (138 aa).

3 helical membrane-spanning segments follow: residues 17–37 (LIVS…TVFF), 43–63 (INLI…LLVC), and 117–137 (FWWM…VVSL).

The protein localises to the cell membrane. This is an uncharacterized protein from Mycoplasma pneumoniae (strain ATCC 29342 / M129 / Subtype 1) (Mycoplasmoides pneumoniae).